A 65-amino-acid polypeptide reads, in one-letter code: Large ribosomal subunit protein bL35 (65 aa).

A disordered region spans residues Met-1–Gln-26. Residues Ala-10–Gln-26 show a composition bias toward basic residues.

Belongs to the bacterial ribosomal protein bL35 family.

This chain is Large ribosomal subunit protein bL35, found in Actinobacillus pleuropneumoniae serotype 7 (strain AP76).